The chain runs to 143 residues: CRISPR-associated endoribonuclease Cas2 (143 aa).

Mg(2+) is bound at residue Asp14.

Belongs to the CRISPR-associated endoribonuclease Cas2 protein family. In terms of assembly, homodimer, forms a heterotetramer with a Cas1 homodimer. Requires Mg(2+) as cofactor.

CRISPR (clustered regularly interspaced short palindromic repeat), is an adaptive immune system that provides protection against mobile genetic elements (viruses, transposable elements and conjugative plasmids). CRISPR clusters contain sequences complementary to antecedent mobile elements and target invading nucleic acids. CRISPR clusters are transcribed and processed into CRISPR RNA (crRNA). Functions as a ssRNA-specific endoribonuclease. Involved in the integration of spacer DNA into the CRISPR cassette. The protein is CRISPR-associated endoribonuclease Cas2 of Campylobacter jejuni subsp. jejuni serotype O:2 (strain ATCC 700819 / NCTC 11168).